Consider the following 531-residue polypeptide: Purine catabolism regulatory protein (531 aa).

This sequence belongs to the CdaR family.

In terms of biological role, activates the expression of pucFG, pucH, pucI, pucJKLM and guaD, while it represses pucABCDE and its own expression. The protein is Purine catabolism regulatory protein (pucR) of Bacillus subtilis (strain 168).